The sequence spans 546 residues: CTP synthase (546 aa).

The amidoligase domain stretch occupies residues 1 to 266 (MTTRYIFVTG…DQLVTKRFGI (266 aa)). Ser-14 is a binding site for CTP. Ser-14 provides a ligand contact to UTP. ATP-binding positions include 15–20 (SLGKGI) and Asp-72. Asp-72 and Glu-140 together coordinate Mg(2+). Residues 147 to 149 (DIE), 187 to 192 (KTKPTQ), and Lys-223 contribute to the CTP site. Residues 187–192 (KTKPTQ) and Lys-223 each bind UTP. An ATP-binding site is contributed by 239 to 241 (KDV). The 252-residue stretch at 291-542 (TIGMVGKYIE…VAAAYTYQKR (252 aa)) folds into the Glutamine amidotransferase type-1 domain. Gly-352 lines the L-glutamine pocket. Cys-379 functions as the Nucleophile; for glutamine hydrolysis in the catalytic mechanism. L-glutamine is bound by residues 380–383 (LGMQ), Glu-403, and Arg-470. Active-site residues include His-515 and Glu-517.

This sequence belongs to the CTP synthase family. Homotetramer.

It catalyses the reaction UTP + L-glutamine + ATP + H2O = CTP + L-glutamate + ADP + phosphate + 2 H(+). The enzyme catalyses L-glutamine + H2O = L-glutamate + NH4(+). It carries out the reaction UTP + NH4(+) + ATP = CTP + ADP + phosphate + 2 H(+). The protein operates within pyrimidine metabolism; CTP biosynthesis via de novo pathway; CTP from UDP: step 2/2. Allosterically activated by GTP, when glutamine is the substrate; GTP has no effect on the reaction when ammonia is the substrate. The allosteric effector GTP functions by stabilizing the protein conformation that binds the tetrahedral intermediate(s) formed during glutamine hydrolysis. Inhibited by the product CTP, via allosteric rather than competitive inhibition. Catalyzes the ATP-dependent amination of UTP to CTP with either L-glutamine or ammonia as the source of nitrogen. Regulates intracellular CTP levels through interactions with the four ribonucleotide triphosphates. This Shewanella halifaxensis (strain HAW-EB4) protein is CTP synthase.